Here is a 126-residue protein sequence, read N- to C-terminus: Gas vesicle protein J (126 aa).

Belongs to the gas vesicle GvpA family. Interacts with GvpA.

The protein localises to the gas vesicle. Its function is as follows. A minor component of the gas vesicle, might be involved in nucleating gas vesicle formation. Gas vesicles (GV) are hollow, gas filled proteinaceous nanostructures. During planktonic growth they allow positioning of the organism at a favorable depth for light or nutrient acquisition. This chain is Gas vesicle protein J, found in Pseudanabaena galeata (strain PCC 6901).